Here is a 178-residue protein sequence, read N- to C-terminus: MKLVVINGTPRKFGRTRVVAKYIADQFEGELYDLAIEELPLYNGEESQRDLEAVKKLKTLVKAADGVVLCTPEYHNAMSGALKNSLDYLSSSEFIHKPVALLAVAGGGKGGINALNSMHASLAGVYANAIPKQVVLDGLHVQDGELGEDAKPLIHDVVKELKAYMSVYKEVKKQLGVE.

An NADP(+)-binding site is contributed by 106–111; sequence GGGKGG.

This sequence belongs to the azoreductase type 2 family. As to quaternary structure, monomer.

It carries out the reaction N,N-dimethyl-1,4-phenylenediamine + aniline + 2 NADP(+) = 4-(dimethylamino)azobenzene + 2 NADPH + 2 H(+). Its function is as follows. Catalyzes the reductive cleavage of azo bond in aromatic azo compounds to the corresponding amines. Requires NADPH as an electron donor for its activity. Compounds with paired naphthalene groups coupled with the azo group are good substrates, with the following preference order: Rocceline &gt; Sumifix Black B &gt; Solar Orange. The sequence is that of NADPH azoreductase (azr) from Bacillus sp. (strain OY1-2).